The following is a 225-amino-acid chain: Transcriptional activator protein BglJ (225 aa).

An HTH luxR-type domain is found at 146-211 (YINQSRTLSP…GLLEAADILL (66 aa)). A DNA-binding region (H-T-H motif) is located at residues 170 to 189 (MTQIAEQLKRNIKTIRAHKF).

In terms of assembly, forms a complex with RcsB; genetically both BglJ and RcsB are required to relieve bgl operon repression by H-NS and by StpA.

A crytic transcriptional activator. When its expression is induced it relieves H-NS repression of the bgl operon. Acts independently of transcription factor LeuO. This Escherichia coli (strain K12) protein is Transcriptional activator protein BglJ (bglJ).